Consider the following 1024-residue polypeptide: Nardilysin-like (1024 aa).

Positions 41–103 (PDIYPEGSVP…DEVKGKGDHQ (63 aa)) are disordered. Acidic residues predominate over residues 52–95 (QIDEDDEDGEEEDSDGSSEDDDDDEDDEEDGEGDEEDEDEDEDE). Residue H129 coordinates Zn(2+). E132 (proton acceptor) is an active-site residue. H133 provides a ligand contact to Zn(2+). E203 is an active-site residue. E210 lines the Zn(2+) pocket.

Belongs to the peptidase M16 family. Zn(2+) serves as cofactor.

It carries out the reaction Hydrolysis of polypeptides, preferably at -Xaa-|-Arg-Lys-, and less commonly at -Arg-|-Arg-Xaa-, in which Xaa is not Arg or Lys.. Functionally, cleaves peptide substrates on the N-terminus of arginine residues in dibasic pairs. The sequence is that of Nardilysin-like from Arabidopsis thaliana (Mouse-ear cress).